The sequence spans 207 residues: Guanylate kinase (207 aa).

The Guanylate kinase-like domain maps to 4 to 184 (NMYYAISAPS…TLNKIKTIII (181 aa)). An ATP-binding site is contributed by 11 to 18 (APSGTGKS).

Belongs to the guanylate kinase family.

It is found in the cytoplasm. The catalysed reaction is GMP + ATP = GDP + ADP. In terms of biological role, essential for recycling GMP and indirectly, cGMP. This Wigglesworthia glossinidia brevipalpis protein is Guanylate kinase.